The chain runs to 340 residues: Protein LSM14 homolog car-1 (340 aa).

One can recognise a Sm domain in the interval Met-1–Pro-81. Residues Ser-101 to Arg-125 are compositionally biased toward low complexity. A disordered region spans residues Ser-101–Gln-148. Residues Asn-126–Gln-148 are compositionally biased toward polar residues. The 37-residue stretch at Val-178–Asp-214 folds into the DFDF domain. The FFD box signature appears at Ala-227 to Ser-243. Residues Thr-251 to Ala-271 carry the TFG box motif. Residues Tyr-277–Gln-340 form a disordered region. A compositionally biased stretch (gly residues) spans Gly-280–Asn-296. Residues Gly-312–Tyr-325 are compositionally biased toward low complexity.

The protein belongs to the LSM14 family.

It is found in the nucleus. Its function is as follows. Transcriptional regulator. Involved in modulating embryonic expression of ATP-dependent chaperone cdc-48.1. May play a role in mRNA gene silencing, and RNA granule (P-body) assembly. The polypeptide is Protein LSM14 homolog car-1 (Caenorhabditis elegans).